The following is a 129-amino-acid chain: Phosphoribosyl-AMP cyclohydrolase (129 aa).

Residue Asp87 coordinates Mg(2+). Residue Cys88 participates in Zn(2+) binding. Mg(2+)-binding residues include Asp89 and Asp91. Zn(2+) contacts are provided by Cys104 and Cys111.

Belongs to the PRA-CH family. As to quaternary structure, homodimer. Requires Mg(2+) as cofactor. Zn(2+) serves as cofactor.

The protein resides in the cytoplasm. The enzyme catalyses 1-(5-phospho-beta-D-ribosyl)-5'-AMP + H2O = 1-(5-phospho-beta-D-ribosyl)-5-[(5-phospho-beta-D-ribosylamino)methylideneamino]imidazole-4-carboxamide. The protein operates within amino-acid biosynthesis; L-histidine biosynthesis; L-histidine from 5-phospho-alpha-D-ribose 1-diphosphate: step 3/9. Its function is as follows. Catalyzes the hydrolysis of the adenine ring of phosphoribosyl-AMP. This is Phosphoribosyl-AMP cyclohydrolase from Ruegeria sp. (strain TM1040) (Silicibacter sp.).